The primary structure comprises 98 residues: Thrombin-like enzyme cerastotin (98 aa).

The 98-residue stretch at 1 to 98 (VIGGAECNIN…IKKPVNGSTH (98 aa)) folds into the Peptidase S1 domain. Residues His41 and Asp85 each act as charge relay system in the active site. Asn94 is a glycosylation site (N-linked (GlcNAc...) asparagine).

This sequence belongs to the peptidase S1 family. Snake venom subfamily. In terms of assembly, monomer. As to expression, expressed by the venom gland.

Its subcellular location is the secreted. Inhibited by PMSF. Thrombin-like snake venom serine protease that preferentially cleaves the alpha-chain of fibrinogen (FGA). Induce platelet aggregation in the presence of exogenous fibrinogen. Possesses esterase and amidolytic activities. The chain is Thrombin-like enzyme cerastotin from Cerastes cerastes (Horned desert viper).